We begin with the raw amino-acid sequence, 362 residues long: Fe-S cluster assembly protein DRE2 (362 aa).

Residues 1–28 form a disordered region; sequence MAPGLDLTPDFHPPTTTTTTTNNAPPQQ. A compositionally biased stretch (low complexity) spans 15 to 28; it reads TTTTTTTNNAPPQQ. An N-terminal SAM-like domain region spans residues 24–165; sequence APPQQRTLLL…KPEYAEEEAV (142 aa). A linker region spans residues 166-254; sequence PLRFGKKKAA…EETLLTEEDL (89 aa). The [2Fe-2S] cluster site is built by Cys264, Cys275, Cys278, and Cys280. The fe-S binding site A stretch occupies residues 264-280; it reads CQPQPGKKRRACKDCTC. [4Fe-4S] cluster is bound by residues Cys325, Cys328, Cys336, and Cys339. 2 consecutive short sequence motifs (cx2C motif) follow at residues 325–328 and 336–339; these read CGSC and CSDC. Residues 325-339 form a fe-S binding site B region; that stretch reads CGSCYLGDAFRCSDC.

Belongs to the anamorsin family. As to quaternary structure, monomer. Interacts with TAH18. Interacts with MIA40. It depends on [2Fe-2S] cluster as a cofactor. Requires [4Fe-4S] cluster as cofactor.

It localises to the cytoplasm. The protein localises to the mitochondrion intermembrane space. Its function is as follows. Component of the cytosolic iron-sulfur (Fe-S) protein assembly (CIA) machinery required for the maturation of extramitochondrial Fe-S proteins. Part of an electron transfer chain functioning in an early step of cytosolic Fe-S biogenesis, facilitating the de novo assembly of a [4Fe-4S] cluster on the scaffold complex CFD1-NBP35. Electrons are transferred to DRE2 from NADPH via the FAD- and FMN-containing protein TAH18. TAH18-DRE2 are also required for the assembly of the diferric tyrosyl radical cofactor of ribonucleotide reductase (RNR), probably by providing electrons for reduction during radical cofactor maturation in the catalytic small subunit RNR2. This is Fe-S cluster assembly protein DRE2 from Chaetomium globosum (strain ATCC 6205 / CBS 148.51 / DSM 1962 / NBRC 6347 / NRRL 1970) (Soil fungus).